A 465-amino-acid polypeptide reads, in one-letter code: WASH complex subunit 1 (465 aa).

The interval 1–54 (MTPVRMQHSLAGQTYAVPFIQPDLRREEAVQQMADALQYLQKVSGDIFSRISQQ) is required for WASH complex assembly. Residues 1-167 (MTPVRMQHSL…EGLGGLPSNI (167 aa)) form a WHD1 region. Residue Lys220 forms a Glycyl lysine isopeptide (Lys-Gly) (interchain with G-Cter in ubiquitin) linkage. Disordered regions lie at residues 297 to 359 (QDGV…VDPS), 376 to 407 (GKAKLRSMKERKLEKQQQKEQEQVRATSQGGH), and 423 to 465 (ISGK…DWES). A compositionally biased stretch (pro residues) spans 302–314 (TPPPPPPPPPPAP). The segment at 349 to 465 (QGAPREVVDP…AEEDEDDWES (117 aa)) is VCA. One can recognise a WH2 domain in the interval 361-383 (GWATLLESIRQAGGIGKAKLRSM). Residues 382 to 398 (SMKERKLEKQQQKEQEQ) are compositionally biased toward basic and acidic residues. A compositionally biased stretch (gly residues) spans 424-436 (SGKGPGAGEGPGG). Positions 456–465 (AEEDEDDWES) are enriched in acidic residues.

This sequence belongs to the WASH1 family. Component of the WASH core complex also described as WASH regulatory complex (SHRC) composed of WASH (WASHC1, WASH2P or WASH3P), WASHC2 (WASHC2A or WASHC2C), WASHC3, WASHC4 and WASHC5. The WASH core complex associates via WASHC2 with the F-actin-capping protein dimer (formed by CAPZA1, CAPZA2 or CAPZA3 and CAPZB) in a transient or substoichiometric manner which was initially described as WASH complex. Interacts (via WHD1 region) with WASHC2C; the interaction is direct. Interacts with VPS35; mediates the association with the retromer CSC complex. Interacts with FKBP15. Interacts with alpha-tubulin. Interacts with BECN1; this interaction can be competed out by AMBRA1 binding. Interacts with BLOC1S2; may associate with the BLOC-1 complex. Interacts with tubulin gamma chain (TUBG1 or TUBG2). Interacts with EXOC1, EXOC4, EXOC8; in MMP14-positive endosomes in breast tumor cells; indicative for an association with the exocyst complex. Interacts with TBC1D23. Ubiquitinated at Lys-220 via 'Lys-63'-linked ubiquitin chains by the TRIM27:MAGEL2 E3 ubiquitin ligase complex, leading to promote endosomal F-actin assembly.

It localises to the early endosome membrane. Its subcellular location is the recycling endosome membrane. The protein resides in the late endosome. It is found in the cytoplasmic vesicle. The protein localises to the autophagosome. It localises to the cytoplasm. Its subcellular location is the cytoskeleton. The protein resides in the microtubule organizing center. It is found in the centrosome. The protein localises to the centriole. In terms of biological role, acts as a component of the WASH core complex that functions as a nucleation-promoting factor (NPF) at the surface of endosomes, where it recruits and activates the Arp2/3 complex to induce actin polymerization, playing a key role in the fission of tubules that serve as transport intermediates during endosome sorting. Involved in endocytic trafficking of EGF. Involved in transferrin receptor recycling. Regulates the trafficking of endosomal alpha5beta1 integrin to the plasma membrane and involved in invasive cell migration. In T-cells involved in endosome-to-membrane recycling of receptors including T-cell receptor (TCR), CD28 and ITGAL; proposed to be implicated in T cell proliferation and effector function. In dendritic cells involved in endosome-to-membrane recycling of major histocompatibility complex (MHC) class II probably involving retromer and subsequently allowing antigen sampling, loading and presentation during T-cell activation. Involved in Arp2/3 complex-dependent actin assembly driving Salmonella typhimurium invasion independent of ruffling. Involved in the exocytosis of MMP14 leading to matrix remodeling during invasive migration and implicating late endosome-to-plasma membrane tubular connections and cooperation with the exocyst complex. Involved in negative regulation of autophagy independently from its role in endosomal sorting by inhibiting BECN1 ubiquitination to inactivate PIK3C3/Vps34 activity. The protein is WASH complex subunit 1 of Homo sapiens (Human).